Reading from the N-terminus, the 147-residue chain is D-aminoacyl-tRNA deacylase (147 aa).

The short motif at 136 to 137 (GP) is the Gly-cisPro motif, important for rejection of L-amino acids element.

This sequence belongs to the DTD family. Homodimer.

The protein localises to the cytoplasm. The catalysed reaction is glycyl-tRNA(Ala) + H2O = tRNA(Ala) + glycine + H(+). It catalyses the reaction a D-aminoacyl-tRNA + H2O = a tRNA + a D-alpha-amino acid + H(+). Functionally, an aminoacyl-tRNA editing enzyme that deacylates mischarged D-aminoacyl-tRNAs. Also deacylates mischarged glycyl-tRNA(Ala), protecting cells against glycine mischarging by AlaRS. Acts via tRNA-based rather than protein-based catalysis; rejects L-amino acids rather than detecting D-amino acids in the active site. By recycling D-aminoacyl-tRNA to D-amino acids and free tRNA molecules, this enzyme counteracts the toxicity associated with the formation of D-aminoacyl-tRNA entities in vivo and helps enforce protein L-homochirality. The protein is D-aminoacyl-tRNA deacylase of Streptococcus uberis (strain ATCC BAA-854 / 0140J).